Consider the following 448-residue polypeptide: MSFTPGKQSSSRASSGNRSGNGILKWADQSDQSRNVQTRGRRAQPKQTATSQQPSAGNVVPYYSWFSGITQFQKGKEFEFAEGQGVPIAPGVPATEAKGYWYRHNRRSFKTADGNQRQLLPRWYFYYLGTGPHAKDQYGTDIDGVFWVASNQADVNTPADILDRDPSSDEAIPTRFPPGTVLPQGYYIEGSGRSAPNSRSTSRTSSRASSAGSRSRANSGNRTPTSGVTPDMADQIASLVLAKLGKDATKPQQVTKQTAKEIRQKILNKPRQKRSPNKQCTVQQCFGKRGPNQNFGGGEMLKLGTSDPQFPILAELAPTAGAFFFGSRLELAKVQNLSGNLDEPQKDVYELRYNGAIRFDSTLSGFETIMKVLNENLNAYQQQDGMMNMSPKPQRQRGQKNGQGENDNISVAAPKSRVQQNKSRELTAEDISLLKKMDEPFTEDTSEI.

The interval M1 to S55 is disordered. Positions S9–G22 are enriched in low complexity. 2 stretches are compositionally biased toward polar residues: residues Q29 to T38 and P45 to S55. The interval Q52 to S194 is RNA-binding. The CoV N NTD domain maps to P61 to G190. Residues R106, R122, and R164 each coordinate RNA. Disordered regions lie at residues T157–D231, I266–G298, and G385–I448. At S167 the chain carries Phosphoserine; by host. T174 carries the post-translational modification Phosphothreonine; by host. Phosphoserine; by host is present on S191. The span at R193–T223 shows a compositional bias: low complexity. The 126-residue stretch at A259 to D384 folds into the CoV N CTD domain. Residues I266–P276 are compositionally biased toward basic residues. The tract at residues I266–D384 is dimerization. At S390 the chain carries Phosphoserine; by host. Over residues Q399–I409 the composition is skewed to polar residues. Basic and acidic residues predominate over residues K422 to E439. S423 carries the post-translational modification Phosphoserine; by host. At T427 the chain carries Phosphothreonine; by host.

Belongs to the betacoronavirus nucleocapsid protein family. In terms of assembly, homooligomer. Both monomeric and oligomeric forms interact with RNA. Interacts with protein M. Interacts with NSP3; this interaction serves to tether the genome to the newly translated replicase-transcriptase complex at a very early stage of infection. In terms of processing, ADP-ribosylated. The ADP-ribosylation is retained in the virion during infection. Phosphorylated on serine and threonine residues.

Its subcellular location is the virion. The protein localises to the host endoplasmic reticulum-Golgi intermediate compartment. It localises to the host Golgi apparatus. Functionally, packages the positive strand viral genome RNA into a helical ribonucleocapsid (RNP) and plays a fundamental role during virion assembly through its interactions with the viral genome and membrane protein M. Plays an important role in enhancing the efficiency of subgenomic viral RNA transcription as well as viral replication. This is Nucleoprotein from Bovine coronavirus (strain LSU-94LSS-051) (BCoV-LSU).